The chain runs to 412 residues: Esterase EstD (412 aa).

An N-terminal signal peptide occupies residues 1 to 20; that stretch reads MRLTVFLSLFLGVMVFGAFD. S243 (nucleophile) is an active-site residue. Residues D347 and H378 each act as charge relay system in the active site.

Belongs to the AB hydrolase superfamily. Esterase 10 family. In terms of assembly, exists mainly as a monomer and, to some extent as a dimer.

The enzyme catalyses a carboxylic ester + H2O = an alcohol + a carboxylate + H(+). Its activity is regulated as follows. Is strongly inhibited by phenylmethylsulfonyl fluoride, a serine protease inhibitor, and by mercury chloride. Diethyl pyrocarbonate, a histidine modifier, also inhibits the reaction, albeit less pronounced than phenylmethylsulfonyl fluoride. EDTA and dithiothreitol have no effect on enzyme activity. Exhibits significant esterase activity with a preference for short acyl chain esters (C4-C8) in vitro. Its physiological function is not known. Displays neither proteolytic activity using casein as substrate, nor peptidase activity when assayed with L-leucine p-nitroanilide and L-proline p-nitroanilide. This chain is Esterase EstD, found in Thermotoga maritima (strain ATCC 43589 / DSM 3109 / JCM 10099 / NBRC 100826 / MSB8).